A 104-amino-acid chain; its full sequence is Large ribosomal subunit protein bL21 (104 aa).

Belongs to the bacterial ribosomal protein bL21 family. In terms of assembly, part of the 50S ribosomal subunit. Contacts protein L20.

In terms of biological role, this protein binds to 23S rRNA in the presence of protein L20. This is Large ribosomal subunit protein bL21 from Rhodopirellula baltica (strain DSM 10527 / NCIMB 13988 / SH1).